The primary structure comprises 179 residues: Large ribosomal subunit protein uL5 (179 aa).

The protein belongs to the universal ribosomal protein uL5 family. As to quaternary structure, part of the 50S ribosomal subunit; part of the 5S rRNA/L5/L18/L25 subcomplex. Contacts the 5S rRNA and the P site tRNA. Forms a bridge to the 30S subunit in the 70S ribosome.

In terms of biological role, this is one of the proteins that bind and probably mediate the attachment of the 5S RNA into the large ribosomal subunit, where it forms part of the central protuberance. In the 70S ribosome it contacts protein S13 of the 30S subunit (bridge B1b), connecting the 2 subunits; this bridge is implicated in subunit movement. Contacts the P site tRNA; the 5S rRNA and some of its associated proteins might help stabilize positioning of ribosome-bound tRNAs. The protein is Large ribosomal subunit protein uL5 of Neisseria meningitidis serogroup C (strain 053442).